The primary structure comprises 483 residues: Spore germination protein B1 (483 aa).

5 helical membrane-spanning segments follow: residues 289 to 309 (ILITIYLPGLYISLVSFHTGL), 323 to 343 (LNVPFPPFVEAFIMIFTIELI), 353 to 373 (PIGQTIGLIGGVVIGQAAVQA), 375 to 395 (IVSALMVIVVSVTALASFTVP), and 410 to 430 (VMISATALGMYGVIMVYLFVI).

This sequence belongs to the GerABKA family.

The protein localises to the cell membrane. Involved in the response to the germinative mixture of L-asparagine, glucose, fructose and potassium ions (AGFK). Cannot stimulate germination in the absence of gerD and gerK gene products (fructose and glucose receptors respectively). The protein is Spore germination protein B1 (gerBA) of Bacillus subtilis (strain 168).